The sequence spans 157 residues: Large ribosomal subunit protein uL3 (157 aa).

The interval 57–98 (GKGFAGSIKRHNQSRGPESHGSRYHRRPGSMGPIKGKLKGKK) is disordered.

The protein belongs to the universal ribosomal protein uL3 family. In terms of assembly, part of the 50S ribosomal subunit. Forms a cluster with proteins L14 and L19.

In terms of biological role, one of the primary rRNA binding proteins, it binds directly near the 3'-end of the 23S rRNA, where it nucleates assembly of the 50S subunit. This Onion yellows phytoplasma (strain OY-M) protein is Large ribosomal subunit protein uL3 (rplC).